Here is a 262-residue protein sequence, read N- to C-terminus: Thiamine thiazole synthase (262 aa).

NAD(+)-binding positions include S40, 59 to 60 (ER), G67, V133, and 159 to 161 (HID). Residues D161 and H176 each coordinate Fe cation. 2 residues coordinate NAD(+): S179 and M226. Residue R236 coordinates glycine.

This sequence belongs to the THI4 family. Homooctamer; tetramer of dimers. The cofactor is Fe(2+).

The enzyme catalyses hydrogen sulfide + glycine + NAD(+) = ADP-5-ethyl-4-methylthiazole-2-carboxylate + nicotinamide + 3 H2O + H(+). It participates in cofactor biosynthesis; thiamine diphosphate biosynthesis. In terms of biological role, involved in the biosynthesis of the thiazole moiety of thiamine. Catalyzes the conversion of NAD and glycine to adenosine diphosphate 5-(2-hydroxyethyl)-4-methylthiazole-2-carboxylate (ADT), an adenylated thiazole intermediate, using free sulfide as a source of sulfur. The sequence is that of Thiamine thiazole synthase from Methanococcus maripaludis (strain C7 / ATCC BAA-1331).